Reading from the N-terminus, the 405-residue chain is DNA primase DnaG (405 aa).

One can recognise a Toprim domain in the interval 172–248; that stretch reads DAIIIVEGRA…HVDYIARAPP (77 aa). Residues Glu178, Asp222, and Asp224 each contribute to the Mg(2+) site. Residues 279–303 form a disordered region; it reads ASGERAEAPPQPAQQPQQEQPAPQR. Low complexity predominate over residues 292 to 303; it reads QQPQQEQPAPQR.

The protein belongs to the archaeal DnaG primase family. As to quaternary structure, forms a ternary complex with MCM helicase and DNA. Component of the archaeal exosome complex. Requires Mg(2+) as cofactor.

It carries out the reaction ssDNA + n NTP = ssDNA/pppN(pN)n-1 hybrid + (n-1) diphosphate.. RNA polymerase that catalyzes the synthesis of short RNA molecules used as primers for DNA polymerase during DNA replication. Also part of the exosome, which is a complex involved in RNA degradation. Acts as a poly(A)-binding protein that enhances the interaction between heteromeric, adenine-rich transcripts and the exosome. The protein is DNA primase DnaG of Pyrobaculum arsenaticum (strain DSM 13514 / JCM 11321 / PZ6).